A 121-amino-acid polypeptide reads, in one-letter code: Large ribosomal subunit protein uL18 (121 aa).

The protein belongs to the universal ribosomal protein uL18 family. As to quaternary structure, part of the 50S ribosomal subunit; part of the 5S rRNA/L5/L18/L25 subcomplex. Contacts the 5S and 23S rRNAs.

In terms of biological role, this is one of the proteins that bind and probably mediate the attachment of the 5S RNA into the large ribosomal subunit, where it forms part of the central protuberance. This chain is Large ribosomal subunit protein uL18, found in Methylibium petroleiphilum (strain ATCC BAA-1232 / LMG 22953 / PM1).